The sequence spans 438 residues: MSTLEELDALDQSQQGGSSNNEGLDGIEQEILAAGIDELNSRTRLLENDIKVMKSEFQRLTHEKSTMLEKIKENQEKISNNKMLPYLVGNVVEILDMQPDEVDVQESANQNSEATRVGKSAVIKTSTRQTIFLPLIGLVEPEELHPGDLIGVNKDSYLIIDKLPSEYDSRVKAMEVDEKPTERYSDIGGLSKQIEELFEAIVLPMQQADKFRKLGVKPPKGCLMFGPPGTGKTLLARACAAQSNATFLKLAAPQLVQMFIGDGAKLVRDAFALAKEKSPAIIFIDELDAIGTKRFDSEKAGDREVQRTMLELLNQLDGFSSDDRVKVIAATNRVDTLDPALLRSGRLDRKLEFPLPNEEARVGILRIHSRKMAIDDDINWEELARSTDEYNGAMLKSVCVEAGMIALRQGDTKINHEHFMDGILEVQMRKSKTLQYFA.

The interval 1-24 is disordered; sequence MSTLEELDALDQSQQGGSSNNEGL. The segment covering 11–22 has biased composition (polar residues); sequence DQSQQGGSSNNE. 226 to 233 serves as a coordination point for ATP; sequence GPPGTGKT.

It belongs to the AAA ATPase family.

The protein localises to the cytoplasm. It localises to the nucleus. The 26S proteasome is involved in the ATP-dependent degradation of ubiquitinated proteins. The regulatory (or ATPase) complex confers ATP dependency and substrate specificity to the 26S complex. The polypeptide is 26S proteasome regulatory subunit 6A (tbp1) (Schizosaccharomyces pombe (strain 972 / ATCC 24843) (Fission yeast)).